A 705-amino-acid polypeptide reads, in one-letter code: Elongation factor G (705 aa).

In terms of domain architecture, tr-type G spans 8–294 (ELCRNFGIMA…SVIDYLPSPL (287 aa)). GTP contacts are provided by residues 17–24 (AHIDAGKT), 92–96 (DTPGH), and 146–149 (NKMD).

Belongs to the TRAFAC class translation factor GTPase superfamily. Classic translation factor GTPase family. EF-G/EF-2 subfamily.

It is found in the cytoplasm. Functionally, catalyzes the GTP-dependent ribosomal translocation step during translation elongation. During this step, the ribosome changes from the pre-translocational (PRE) to the post-translocational (POST) state as the newly formed A-site-bound peptidyl-tRNA and P-site-bound deacylated tRNA move to the P and E sites, respectively. Catalyzes the coordinated movement of the two tRNA molecules, the mRNA and conformational changes in the ribosome. The chain is Elongation factor G from Cereibacter sphaeroides (strain ATCC 17023 / DSM 158 / JCM 6121 / CCUG 31486 / LMG 2827 / NBRC 12203 / NCIMB 8253 / ATH 2.4.1.) (Rhodobacter sphaeroides).